A 105-amino-acid polypeptide reads, in one-letter code: Defensin-like protein (105 aa).

A signal peptide spans 1–25 (MARSLCFMAFAILAMMLFVAYEVQA). 4 disulfides stabilise this stretch: Cys-28–Cys-72, Cys-39–Cys-59, Cys-45–Cys-66, and Cys-49–Cys-68.

Belongs to the DEFL family. In terms of tissue distribution, flower. Found in petals, stamen and pistils, but not in sepals. In particular, accumulation in a configuration surrounding the inner reproductive whorls.

The protein resides in the secreted. It is found in the cell wall. It localises to the vacuole. Involved in floral organogenesis. May play a protective role in flowers by protecting the reproductive organs from potential pathogen attack. The protein is Defensin-like protein (FST) of Nicotiana tabacum (Common tobacco).